A 526-amino-acid polypeptide reads, in one-letter code: Tyrosine-protein kinase transforming protein Src (526 aa).

The span at 1 to 15 (MGSSKSKPKGPSQRR) shows a compositional bias: basic residues. Residues 1–59 (MGSSKSKPKGPSQRRRSLEPPDSTHHGGFPASQTPNKTAAPDTHRTPSRSFGTVATEPK) form a disordered region. Gly-2 is lipidated: N-myristoyl glycine; by host. Over residues 16–25 (RSLEPPDSTH) the composition is skewed to basic and acidic residues. Positions 81 to 142 (GGVTTFVALY…PSNYVAPSDS (62 aa)) constitute an SH3 domain. Positions 148-245 (WYFGKITRRE…GLCHRLTNVC (98 aa)) constitute an SH2 domain. The Protein kinase domain occupies 267-517 (LRLEVKLGQG…TFEYLQAQLL (251 aa)). ATP is bound by residues 273 to 281 (LGQGCFGEV) and Lys-295. The Proton acceptor role is filled by Asp-386. The residue at position 416 (Tyr-416) is a Phosphotyrosine; by autocatalysis.

It belongs to the protein kinase superfamily. Tyr protein kinase family. SRC subfamily. As to quaternary structure, homodimer. The phosphorylated form is termed pp60v-src.

It carries out the reaction L-tyrosyl-[protein] + ATP = O-phospho-L-tyrosyl-[protein] + ADP + H(+). This phosphoprotein, required for both the initiation and the maintenance of neoplastic transformation, is a protein kinase that catalyzes the phosphorylation of tyrosine residues in vitro. This Rous sarcoma virus subgroup E (strain Schmidt-Ruppin) (RSV-SR-E) protein is Tyrosine-protein kinase transforming protein Src (V-SRC).